Reading from the N-terminus, the 286-residue chain is Translocon-associated protein subunit alpha (286 aa).

The first 21 residues, 1–21, serve as a signal peptide directing secretion; it reads MRLLPRLLLLFLLAFPAAVLL. The Lumenal portion of the chain corresponds to 22 to 207; the sequence is RGGPGGSLAL…EREDGLDGET (186 aa). Residues 46 to 75 show a composition bias toward acidic residues; sequence IIEDEDDEAEVEEDEPTDLAEDKEEEDVSS. Residues 46-83 form a disordered region; sequence IIEDEDDEAEVEEDEPTDLAEDKEEEDVSSEPEASPSA. N-linked (GlcNAc...) asparagine glycans are attached at residues asparagine 136 and asparagine 191. A helical membrane pass occupies residues 208–228; that stretch reads IFMYMFLAGLGLLVVVGLHQL. Topologically, residues 229 to 286 are cytoplasmic; that stretch reads LESRKRKRPIQKVEMGTSSQNDVDMSWIPQETLNQINKASPRRQPRKRAQKRSVGSDE. A disordered region spans residues 236 to 286; sequence RPIQKVEMGTSSQNDVDMSWIPQETLNQINKASPRRQPRKRAQKRSVGSDE. Residues 244 to 266 are compositionally biased toward polar residues; it reads GTSSQNDVDMSWIPQETLNQINK. A Phosphoserine modification is found at serine 247. The residue at position 260 (threonine 260) is a Phosphothreonine. Serine 268 bears the Phosphoserine mark. The span at 268-279 shows a compositional bias: basic residues; sequence SPRRQPRKRAQK.

It belongs to the TRAP-alpha family. As to quaternary structure, heterotetramer of TRAP-alpha, TRAP-beta, TRAP-delta and TRAP-gamma. Interacts with palmitoylated calnexin (CALX), the interaction is required for efficient folding of glycosylated proteins.

It localises to the endoplasmic reticulum membrane. TRAP proteins are part of a complex whose function is to bind calcium to the ER membrane and thereby regulate the retention of ER resident proteins. May be involved in the recycling of the translocation apparatus after completion of the translocation process or may function as a membrane-bound chaperone facilitating folding of translocated proteins. This is Translocon-associated protein subunit alpha (Ssr1) from Mus musculus (Mouse).